Reading from the N-terminus, the 445-residue chain is UPF0210 protein STER_0157 (445 aa).

Belongs to the UPF0210 family. As to quaternary structure, homodimer.

The chain is UPF0210 protein STER_0157 from Streptococcus thermophilus (strain ATCC BAA-491 / LMD-9).